A 195-amino-acid chain; its full sequence is Probable GTP-binding protein EngB (195 aa).

Residues 24 to 195 enclose the EngB-type G domain; sequence GLSEVGLSGR…QIWNVIEKYL (172 aa). Residues 32 to 39, 59 to 63, 77 to 80, 144 to 147, and 176 to 178 contribute to the GTP site; these read GRSNVGKS, GKTQT, DVPG, TKED, and YSS. Positions 39 and 61 each coordinate Mg(2+).

This sequence belongs to the TRAFAC class TrmE-Era-EngA-EngB-Septin-like GTPase superfamily. EngB GTPase family. Mg(2+) serves as cofactor.

In terms of biological role, necessary for normal cell division and for the maintenance of normal septation. This chain is Probable GTP-binding protein EngB, found in Staphylococcus saprophyticus subsp. saprophyticus (strain ATCC 15305 / DSM 20229 / NCIMB 8711 / NCTC 7292 / S-41).